The following is a 206-amino-acid chain: Glycerol-3-phosphate acyltransferase 1 (206 aa).

The next 5 helical transmembrane spans lie at 14–34, 67–87, 91–111, 124–144, and 148–168; these read IALA…GLIL, ATLL…SYFL, AAII…WIGF, LLGV…AVAF, and YSSL…WILG.

This sequence belongs to the PlsY family. In terms of assembly, probably interacts with PlsX.

It is found in the cell inner membrane. The catalysed reaction is an acyl phosphate + sn-glycerol 3-phosphate = a 1-acyl-sn-glycero-3-phosphate + phosphate. The protein operates within lipid metabolism; phospholipid metabolism. Functionally, catalyzes the transfer of an acyl group from acyl-phosphate (acyl-PO(4)) to glycerol-3-phosphate (G3P) to form lysophosphatidic acid (LPA). This enzyme utilizes acyl-phosphate as fatty acyl donor, but not acyl-CoA or acyl-ACP. The polypeptide is Glycerol-3-phosphate acyltransferase 1 (Rhizobium johnstonii (strain DSM 114642 / LMG 32736 / 3841) (Rhizobium leguminosarum bv. viciae)).